Reading from the N-terminus, the 168-residue chain is Cell division inhibitor SulA (168 aa).

The tract at residues 106-112 (ALLTGNY) is ftsZ binding. Residues 161–168 (KIHSYLYH) are lon protease binding.

The protein belongs to the SulA family. Interacts with FtsZ. In terms of processing, is rapidly cleaved and degraded by the Lon protease once DNA damage is repaired.

Component of the SOS system and an inhibitor of cell division. Accumulation of SulA causes rapid cessation of cell division and the appearance of long, non-septate filaments. In the presence of GTP, binds a polymerization-competent form of FtsZ in a 1:1 ratio, thus inhibiting FtsZ polymerization and therefore preventing it from participating in the assembly of the Z ring. This mechanism prevents the premature segregation of damaged DNA to daughter cells during cell division. The polypeptide is Cell division inhibitor SulA (Yersinia pseudotuberculosis serotype O:1b (strain IP 31758)).